Reading from the N-terminus, the 276-residue chain is MEVKPLKKLKLYGFNNLTKTLSFNMYDICYAKTPEHRDAYIQYIDEEYNAQRLTSIVTEVARIVGANILNIAKQDYDPQGASVTMLIAEEHLGPENPDDNPFDPVYTDKEGPLPDAVVAHLDKSHITVHTYPESHPHGGISTFRADIDVSTCGQISPLKALNFLIESFAPDIIVADYRVRGFTRDVDGKKVFIDHKINSIQNYVDRKYRDLYQMIDVTVFQEYIFHTKMILKDFDLDNYLFGTAKKELSINDKRKIKQRLKKEMAEIFYGKNMPRM.

Ser124 (schiff-base intermediate with substrate; via pyruvic acid) is an active-site residue. Ser124 carries the post-translational modification Pyruvic acid (Ser); by autocatalysis. Catalysis depends on His129, which acts as the Proton acceptor; for processing activity. Cys152 functions as the Proton donor; for catalytic activity in the catalytic mechanism.

It belongs to the prokaryotic AdoMetDC family. Type 2 subfamily. In terms of assembly, heterooctamer of four alpha and four beta chains arranged as a tetramer of alpha/beta heterodimers. Requires pyruvate as cofactor. Is synthesized initially as an inactive proenzyme. Formation of the active enzyme involves a self-maturation process in which the active site pyruvoyl group is generated from an internal serine residue via an autocatalytic post-translational modification. Two non-identical subunits are generated from the proenzyme in this reaction, and the pyruvate is formed at the N-terminus of the alpha chain, which is derived from the carboxyl end of the proenzyme. The post-translation cleavage follows an unusual pathway, termed non-hydrolytic serinolysis, in which the side chain hydroxyl group of the serine supplies its oxygen atom to form the C-terminus of the beta chain, while the remainder of the serine residue undergoes an oxidative deamination to produce ammonia and the pyruvoyl group blocking the N-terminus of the alpha chain.

The enzyme catalyses S-adenosyl-L-methionine + H(+) = S-adenosyl 3-(methylsulfanyl)propylamine + CO2. The protein operates within amine and polyamine biosynthesis; S-adenosylmethioninamine biosynthesis; S-adenosylmethioninamine from S-adenosyl-L-methionine: step 1/1. Functionally, catalyzes the decarboxylation of S-adenosylmethionine to S-adenosylmethioninamine (dcAdoMet), the propylamine donor required for the synthesis of the polyamines spermine and spermidine from the diamine putrescine. The sequence is that of S-adenosylmethionine decarboxylase proenzyme from Desulfitobacterium hafniense (strain Y51).